A 202-amino-acid polypeptide reads, in one-letter code: LexA repressor (202 aa).

Positions 28–48 form a DNA-binding region, H-T-H motif; it reads RAEIAQRLGFRSPNAAEEHLK. Active-site for autocatalytic cleavage activity residues include Ser119 and Lys156.

The protein belongs to the peptidase S24 family. Homodimer.

The enzyme catalyses Hydrolysis of Ala-|-Gly bond in repressor LexA.. Functionally, represses a number of genes involved in the response to DNA damage (SOS response), including recA and lexA. Binds to the 16 bp palindromic sequence 5'-CTGTATATATATACAG-3'. In the presence of single-stranded DNA, RecA interacts with LexA causing an autocatalytic cleavage which disrupts the DNA-binding part of LexA, leading to derepression of the SOS regulon and eventually DNA repair. The protein is LexA repressor of Cronobacter sakazakii (strain ATCC BAA-894) (Enterobacter sakazakii).